A 59-amino-acid chain; its full sequence is Potassium channel toxin alpha-KTx 3.5 (59 aa).

The first 22 residues, 1 to 22 (MKVFSAVLIILFVCSMIIGINA), serve as a signal peptide directing secretion. Intrachain disulfides connect cysteine 29/cysteine 49, cysteine 35/cysteine 54, and cysteine 39/cysteine 56. Residues 47-54 (GKCMNGKC) form an interaction with Ca(2+)-activated K(+) channels region.

It belongs to the short scorpion toxin superfamily. Potassium channel inhibitor family. Alpha-KTx 03 subfamily. As to expression, expressed by the venom gland.

It is found in the secreted. Its function is as follows. Has also been shown to inhibit with high potency Kv1.3/KCNA3 and with low potency Kv1.1/KCNA1 and Kv1.2/KCNA2 voltage-gated potassium channels. Also binds and inhibits the molluscan calcium-activated potassium channels KCa (Kd=135 nM). This chain is Potassium channel toxin alpha-KTx 3.5 (KTX2), found in Androctonus australis (Sahara scorpion).